The chain runs to 85 residues: Large ribosomal subunit protein bL27 (85 aa).

The segment covering 1 to 10 (MAQKKGGGST) has biased composition (gly residues). The segment at 1–20 (MAQKKGGGSTRNGRDSKPKM) is disordered.

It belongs to the bacterial ribosomal protein bL27 family.

The sequence is that of Large ribosomal subunit protein bL27 from Delftia acidovorans (strain DSM 14801 / SPH-1).